An 892-amino-acid chain; its full sequence is Putative ubiquitin carboxyl-terminal hydrolase 11 (892 aa).

The region spanning 17–132 (YTPEEERRIV…GGPPVPRKLI (116 aa)) is the DUSP domain. The disordered stretch occupies residues 69–89 (EPSEVTRPGPIDNHDIIDSES). Residues 301–880 (GGLQNLGNTC…AAYVLFYQRV (580 aa)) enclose the USP domain. Cys-310 functions as the Nucleophile in the catalytic mechanism. The segment at 636-660 (NSGNENGHVPDESSRSILSRDTETE) is disordered. The span at 643–657 (HVPDESSRSILSRDT) shows a compositional bias: basic and acidic residues. Residue His-838 is the Proton acceptor of the active site.

The protein belongs to the peptidase C19 family.

The enzyme catalyses Thiol-dependent hydrolysis of ester, thioester, amide, peptide and isopeptide bonds formed by the C-terminal Gly of ubiquitin (a 76-residue protein attached to proteins as an intracellular targeting signal).. Recognizes and hydrolyzes the peptide bond at the C-terminal Gly of ubiquitin. Involved in the processing of poly-ubiquitin precursors as well as that of ubiquitinated proteins. The polypeptide is Putative ubiquitin carboxyl-terminal hydrolase 11 (UBP11) (Arabidopsis thaliana (Mouse-ear cress)).